A 373-amino-acid polypeptide reads, in one-letter code: NAD(P)H-quinone oxidoreductase subunit 1 (373 aa).

8 helical membrane passes run 28 to 48 (LLWLPLPMLLVLVAAVVGVLV), 98 to 118 (LLFTLGPVLVVVPVIISWLII), 129 to 149 (VGVGIFLWISFSSIQPIGLLM), 177 to 197 (LALAVLAIVMMTNSLSTVDIV), 205 to 225 (ILSWNIWRQPVGFLIFWICAL), 267 to 287 (VLSAVLVSVLYLGGWGFPIPV), 309 to 329 (TVGIVMTVLKAYLLVFVAILL), and 348 to 368 (FLLPLSLVNLLVTAALKLAFP).

It belongs to the complex I subunit 1 family. As to quaternary structure, NDH-1 is composed of at least 11 different subunits.

The protein resides in the cellular thylakoid membrane. The enzyme catalyses a plastoquinone + NADH + (n+1) H(+)(in) = a plastoquinol + NAD(+) + n H(+)(out). The catalysed reaction is a plastoquinone + NADPH + (n+1) H(+)(in) = a plastoquinol + NADP(+) + n H(+)(out). In terms of biological role, NDH-1 shuttles electrons from an unknown electron donor, via FMN and iron-sulfur (Fe-S) centers, to quinones in the respiratory and/or the photosynthetic chain. The immediate electron acceptor for the enzyme in this species is believed to be plastoquinone. Couples the redox reaction to proton translocation, and thus conserves the redox energy in a proton gradient. This chain is NAD(P)H-quinone oxidoreductase subunit 1, found in Synechococcus sp. (strain CC9605).